The following is a 466-amino-acid chain: Asparagine--tRNA ligase (466 aa).

The protein belongs to the class-II aminoacyl-tRNA synthetase family. In terms of assembly, homodimer.

It localises to the cytoplasm. The catalysed reaction is tRNA(Asn) + L-asparagine + ATP = L-asparaginyl-tRNA(Asn) + AMP + diphosphate + H(+). In Pectobacterium atrosepticum (strain SCRI 1043 / ATCC BAA-672) (Erwinia carotovora subsp. atroseptica), this protein is Asparagine--tRNA ligase.